The primary structure comprises 352 residues: Lipoyl synthase (352 aa).

The interval 1–21 is disordered; the sequence is MTSVDTPTPHGGTPAPAPATA. Residues C71, C76, C82, C97, C101, C104, and S308 each coordinate [4Fe-4S] cluster. One can recognise a Radical SAM core domain in the interval 83–297; that stretch reads WEDREATFLI…SRVAEEIGFA (215 aa).

Belongs to the radical SAM superfamily. Lipoyl synthase family. It depends on [4Fe-4S] cluster as a cofactor.

The protein localises to the cytoplasm. The catalysed reaction is [[Fe-S] cluster scaffold protein carrying a second [4Fe-4S](2+) cluster] + N(6)-octanoyl-L-lysyl-[protein] + 2 oxidized [2Fe-2S]-[ferredoxin] + 2 S-adenosyl-L-methionine + 4 H(+) = [[Fe-S] cluster scaffold protein] + N(6)-[(R)-dihydrolipoyl]-L-lysyl-[protein] + 4 Fe(3+) + 2 hydrogen sulfide + 2 5'-deoxyadenosine + 2 L-methionine + 2 reduced [2Fe-2S]-[ferredoxin]. Its pathway is protein modification; protein lipoylation via endogenous pathway; protein N(6)-(lipoyl)lysine from octanoyl-[acyl-carrier-protein]: step 2/2. In terms of biological role, catalyzes the radical-mediated insertion of two sulfur atoms into the C-6 and C-8 positions of the octanoyl moiety bound to the lipoyl domains of lipoate-dependent enzymes, thereby converting the octanoylated domains into lipoylated derivatives. The protein is Lipoyl synthase of Nocardia farcinica (strain IFM 10152).